The chain runs to 507 residues: Tryptophan aminotransferase-related protein 2 (507 aa).

The interval 91-135 (PPPHHHHHDAGLATRSSDAAVHRRARTASSMAPSTGKPAVTTDSV) is disordered. Residues Tyr-169, 211 to 212 (ST), Asn-282, 304 to 307 (DLAY), 327 to 330 (TVSK), and Arg-338 contribute to the pyridoxal 5'-phosphate site. Lys-330 is modified (N6-(pyridoxal phosphate)lysine).

This sequence belongs to the alliinase family. It depends on pyridoxal 5'-phosphate as a cofactor. In terms of tissue distribution, widely expressed.

The catalysed reaction is L-tryptophan + 2-oxoglutarate = indole-3-pyruvate + L-glutamate. The protein operates within plant hormone metabolism; auxin biosynthesis. In terms of biological role, probable tryptophan aminotransferase involved in auxin (IAA) biosynthesis. Required for auxin production to initiate multiple change in growth in response to environmental and developmental cues. Functions upstream of YUCCA1 in auxin biosynthesis. Required for polar auxin transport. The chain is Tryptophan aminotransferase-related protein 2 from Oryza sativa subsp. japonica (Rice).